The chain runs to 298 residues: Interferon-inducible double-stranded RNA-dependent protein kinase activator A homolog B (298 aa).

DRBM domains are found at residues 20 to 87 (TPIQ…ILRG), 112 to 180 (NPVG…KFKT), and 225 to 293 (DYVK…YLKI).

The protein belongs to the PRKRA family. In terms of assembly, homodimer. Interacts with dicer1 and eif2ak2/pkr. Also able to interact with dsRNA. Associates with ribosomes. In terms of tissue distribution, expressed in brain, heart, kidney, liver, nerve and spleen.

It is found in the cytoplasm. The protein localises to the perinuclear region. The protein resides in the nucleus. Its subcellular location is the nucleolus. Activates eif2ak2/pkr in the absence of double-stranded RNA (dsRNA), leading to phosphorylation of eif2s1/efi2-alpha and inhibition of translation and induction of apoptosis. Required for siRNA production by dicer1 and for subsequent siRNA-mediated post-transcriptional gene silencing. Does not seem to be required for processing of pre-miRNA to miRNA by dicer1. The protein is Interferon-inducible double-stranded RNA-dependent protein kinase activator A homolog B (prkra-b) of Xenopus laevis (African clawed frog).